A 127-amino-acid chain; its full sequence is Glycine cleavage system H protein 1 (127 aa).

Positions S20–I101 constitute a Lipoyl-binding domain. N6-lipoyllysine is present on K60.

The protein belongs to the GcvH family. In terms of assembly, the glycine cleavage system is composed of four proteins: P, T, L and H. (R)-lipoate serves as cofactor.

The glycine cleavage system catalyzes the degradation of glycine. The H protein shuttles the methylamine group of glycine from the P protein to the T protein. This chain is Glycine cleavage system H protein 1, found in Pseudomonas syringae pv. tomato (strain ATCC BAA-871 / DC3000).